The chain runs to 164 residues: UPF0201 protein MA_4659 (164 aa).

The protein belongs to the UPF0201 family.

The polypeptide is UPF0201 protein MA_4659 (Methanosarcina acetivorans (strain ATCC 35395 / DSM 2834 / JCM 12185 / C2A)).